The following is a 585-amino-acid chain: Putative sulfur deprivation response regulator (585 aa).

Transmembrane regions (helical) follow at residues 5–25 (VVDA…RGII), 30–50 (AFAG…MIAA), 83–103 (VASV…IPVV), 117–137 (FMMP…IGTS), and 162–182 (IIGL…SPLL). RCK C-terminal domains are found at residues 189–274 (MMAA…LPGL) and 288–372 (ETVA…STEW). A run of 5 helical transmembrane segments spans residues 389–409 (LALF…SMDV), 411–431 (PLST…VLTV), 442–462 (ILLT…TGLA), 482–502 (VAAI…GAAV), and 561–581 (FGLP…VLYF).

It belongs to the CitM (TC 2.A.11) transporter family.

It localises to the membrane. Its function is as follows. Not known; mutations in SAC1 produces cells that cannot synthesize arylsulfatase and cannot take up sulfate as rapidly as wild-type cells. SAC1 is necessary for cells to survive sulfur deprivation. In Chlamydomonas reinhardtii (Chlamydomonas smithii), this protein is Putative sulfur deprivation response regulator (SAC1).